The primary structure comprises 336 residues: MSFLSKNGAGILACLLISILSWYLGGFFPVVGAPVFAIFIGMLLHPFLSSYKQLDAGLTFSSKKLLQYAVVLLGFGLNISQVFAVGQSSLPVILSTISIALIIAYLFQRFFALDTKLATLVGVGSSICGGSAIAATAPVIDAKEKEVAQAISVIFFFNVLAALIFPTLGTWLHLSNEGFALFAGTAVNDTSSVTAAASAWDSLYQSNTLESATIVKLTRTLAIIPITLFLSYWQSRQQENKQSLQLKKVFPLFILYFILASLLTTLLTSLGVSSSFFTPLKELSKFLIVMAMSAIGLKTNLVAMVKSSGKSILLGAICWIAIILTTLGMQTLIGIF.

8 helical membrane-spanning segments follow: residues 65–84, 91–113, 118–140, 153–175, 211–233, 249–271, 286–305, and 312–334; these read LLQY…QVFA, PVIL…FFAL, ATLV…APVI, VIFF…LHLS, SATI…LSYW, VFPL…TSLG, FLIV…VAMV, and ILLG…TLIG.

It belongs to the UPF0324 family.

It is found in the cell membrane. The chain is UPF0324 membrane protein SP_0034 from Streptococcus pneumoniae serotype 4 (strain ATCC BAA-334 / TIGR4).